We begin with the raw amino-acid sequence, 402 residues long: MRPKQVWVSVAFEGEWNEKKPYVTESIEAGVDVIVCLPEDVERVKELGNVKVAVPLMPESPGSPDLALEELDAIDADVVIVGKGGEGDGSIDLPDDISESIDAALIEKARDRGFEVAEYVEILDKPYERFAAEIAKNVGPDYVIAIGRDWKIIPLENLIAELQGEKTQLIAGARDAEEARIAFETLEVGSDGVLLDAERIDPSEIKKTAEIAERAAAERFELVAVEVKEVKPIGKGDRVCVDTCSLMSEGEGMLVGSTSRGMFLIHSESLENPYVEPRPFRVNAGPVHAYIRVPGGKTKYLAELRPGDEVLIVDTEGRTRAAVVGRLKIERRPLMLIRAEYEGVEIQTIVQNAETIHLVREDGEPVSVVDLKPGDKVLAYVETEEGKGRHFGMEVEETIVEK.

The protein belongs to the archaeal-type DHQ synthase family.

The catalysed reaction is 2-amino-2,3,7-trideoxy-D-lyxo-hept-6-ulosonate + NAD(+) + H2O = 3-dehydroquinate + NH4(+) + NADH + H(+). Functionally, catalyzes the oxidative deamination and cyclization of 2-amino-3,7-dideoxy-D-threo-hept-6-ulosonic acid (ADH) to yield 3-dehydroquinate (DHQ), which is fed into the canonical shikimic pathway of aromatic amino acid biosynthesis. The protein is 3-dehydroquinate synthase of Methanopyrus kandleri (strain AV19 / DSM 6324 / JCM 9639 / NBRC 100938).